We begin with the raw amino-acid sequence, 313 residues long: Synaptophysin (313 aa).

Topologically, residues Met1–Pro25 are cytoplasmic. Residues Val21 to Gly227 form the MARVEL domain. The helical transmembrane segment at Leu26–Gly49 threads the bilayer. Topologically, residues Glu50–Phe106 are vesicular. A glycan (N-linked (GlcNAc...) asparagine) is linked at Asn59. Tyr81 carries the phosphotyrosine modification. N-linked (GlcNAc...) asparagine glycosylation occurs at Asn99. A helical transmembrane segment spans residues Phe107–Asn130. At Lys131–Lys137 the chain is on the cytoplasmic side. A helical membrane pass occupies residues Gly138–Ala161. Residues Lys162–Ser199 are Vesicular-facing. The helical transmembrane segment at Gly200 to Phe223 threads the bilayer. The Cytoplasmic portion of the chain corresponds to Lys224–Met313. The disordered stretch occupies residues Gly238 to Met313. Positions Ala253–Gly263 are enriched in gly residues. The segment at Gly254 to Gly304 is repeats, Gly/Tyr-rich. The span at Pro264 to Ser283 shows a compositional bias: low complexity. Over residues Ser284–Pro302 the composition is skewed to gly residues.

This sequence belongs to the synaptophysin/synaptobrevin family. Homohexamer or homotetramer. Interacts with SRCIN1. Interacts with VAMP2; the interaction is inhibited by interaction of VAPM2 with SEPT8. Ubiquitinated; mediated by SIAH1 or SIAH2 and leading to its subsequent proteasomal degradation. In terms of processing, phosphorylated by SRC. In terms of tissue distribution, characteristic of a type of small (30-80 nm) neurosecretory vesicles, including presynaptic vesicles, but also vesicles of various neuroendocrine cells of both neuronal and epithelial phenotype.

It localises to the cytoplasmic vesicle. It is found in the secretory vesicle. The protein resides in the synaptic vesicle membrane. Its subcellular location is the synapse. The protein localises to the synaptosome. Its function is as follows. Possibly involved in structural functions as organizing other membrane components or in targeting the vesicles to the plasma membrane. Involved in the regulation of short-term and long-term synaptic plasticity. In Bos taurus (Bovine), this protein is Synaptophysin (SYP).